Here is a 1517-residue protein sequence, read N- to C-terminus: DNA-directed RNA polymerase subunit beta' (1517 aa).

Residues Cys71, Cys73, Cys86, and Cys89 each coordinate Zn(2+). Asp482, Asp484, and Asp486 together coordinate Mg(2+). Residues Cys812, Cys886, Cys893, and Cys896 each contribute to the Zn(2+) site.

This sequence belongs to the RNA polymerase beta' chain family. The RNAP catalytic core consists of 2 alpha, 1 beta, 1 beta' and 1 omega subunit. When a sigma factor is associated with the core the holoenzyme is formed, which can initiate transcription. Mg(2+) is required as a cofactor. Requires Zn(2+) as cofactor.

It catalyses the reaction RNA(n) + a ribonucleoside 5'-triphosphate = RNA(n+1) + diphosphate. Its function is as follows. DNA-dependent RNA polymerase catalyzes the transcription of DNA into RNA using the four ribonucleoside triphosphates as substrates. This chain is DNA-directed RNA polymerase subunit beta', found in Campylobacter jejuni subsp. jejuni serotype O:2 (strain ATCC 700819 / NCTC 11168).